The following is a 114-amino-acid chain: Hydrogenase maturation factor HypA (114 aa).

H2 provides a ligand contact to Ni(2+). Residues C73, C76, C90, and C93 each coordinate Zn(2+).

This sequence belongs to the HypA/HybF family.

Involved in the maturation of [NiFe] hydrogenases. Required for nickel insertion into the metal center of the hydrogenase. This is Hydrogenase maturation factor HypA from Klebsiella pneumoniae (strain 342).